A 391-amino-acid chain; its full sequence is uncharacterized protein (391 aa).

This sequence belongs to the mimivirus L17x/L18x family.

This is an uncharacterized protein from Acanthamoeba polyphaga (Amoeba).